Consider the following 379-residue polypeptide: Chaperone protein DnaJ (379 aa).

One can recognise a J domain in the interval 5-69; that stretch reads DYYEVLGISK…NKRASYDQFG (65 aa). The segment at 136–218 adopts a CR-type zinc-finger fold; sequence GTTKEISIRK…CHGKGTENKT (83 aa). Zn(2+) contacts are provided by Cys149, Cys152, Cys166, Cys169, Cys192, Cys195, Cys206, and Cys209. 4 CXXCXGXG motif repeats span residues 149–156, 166–173, 192–199, and 206–213; these read CETCHGDG, CSYCNGAG, CPKCNGSG, and CPTCHGKG.

The protein belongs to the DnaJ family. In terms of assembly, homodimer. Zn(2+) is required as a cofactor.

Its subcellular location is the cytoplasm. In terms of biological role, participates actively in the response to hyperosmotic and heat shock by preventing the aggregation of stress-denatured proteins and by disaggregating proteins, also in an autonomous, DnaK-independent fashion. Unfolded proteins bind initially to DnaJ; upon interaction with the DnaJ-bound protein, DnaK hydrolyzes its bound ATP, resulting in the formation of a stable complex. GrpE releases ADP from DnaK; ATP binding to DnaK triggers the release of the substrate protein, thus completing the reaction cycle. Several rounds of ATP-dependent interactions between DnaJ, DnaK and GrpE are required for fully efficient folding. Also involved, together with DnaK and GrpE, in the DNA replication of plasmids through activation of initiation proteins. The protein is Chaperone protein DnaJ of Staphylococcus aureus (strain bovine RF122 / ET3-1).